Consider the following 117-residue polypeptide: 5-hydroxyisourate hydrolase (117 aa).

Residues histidine 7, arginine 45, and tyrosine 114 each contribute to the substrate site.

The protein belongs to the transthyretin family. 5-hydroxyisourate hydrolase subfamily. As to quaternary structure, homotetramer.

The catalysed reaction is 5-hydroxyisourate + H2O = 5-hydroxy-2-oxo-4-ureido-2,5-dihydro-1H-imidazole-5-carboxylate + H(+). Catalyzes the hydrolysis of 5-hydroxyisourate (HIU) to 2-oxo-4-hydroxy-4-carboxy-5-ureidoimidazoline (OHCU). This chain is 5-hydroxyisourate hydrolase, found in Ralstonia nicotianae (strain ATCC BAA-1114 / GMI1000) (Ralstonia solanacearum).